The sequence spans 73 residues: DNA-directed RNA polymerase subunit Rpo10 (73 aa).

4 residues coordinate Zn(2+): cysteine 7, cysteine 10, cysteine 44, and cysteine 45.

The protein belongs to the archaeal Rpo10/eukaryotic RPB10 RNA polymerase subunit family. As to quaternary structure, part of the RNA polymerase complex. Forms an Rpo3-Rpo10-Rpo11-Rpo12 complex upon coexpression. Requires Zn(2+) as cofactor.

It is found in the cytoplasm. The enzyme catalyses RNA(n) + a ribonucleoside 5'-triphosphate = RNA(n+1) + diphosphate. DNA-dependent RNA polymerase (RNAP) catalyzes the transcription of DNA into RNA using the four ribonucleoside triphosphates as substrates. In Methanocaldococcus jannaschii (strain ATCC 43067 / DSM 2661 / JAL-1 / JCM 10045 / NBRC 100440) (Methanococcus jannaschii), this protein is DNA-directed RNA polymerase subunit Rpo10.